The chain runs to 625 residues: Phosphomethylpyrimidine synthase (625 aa).

Substrate-binding positions include Asn230, Met259, Tyr288, His324, 344–346 (SRG), 385–388 (DGLR), and Glu424. His428 is a Zn(2+) binding site. Tyr451 lines the substrate pocket. Position 492 (His492) interacts with Zn(2+). Cys572, Cys575, and Cys580 together coordinate [4Fe-4S] cluster.

The protein belongs to the ThiC family. As to quaternary structure, homodimer. [4Fe-4S] cluster serves as cofactor.

It carries out the reaction 5-amino-1-(5-phospho-beta-D-ribosyl)imidazole + S-adenosyl-L-methionine = 4-amino-2-methyl-5-(phosphooxymethyl)pyrimidine + CO + 5'-deoxyadenosine + formate + L-methionine + 3 H(+). The protein operates within cofactor biosynthesis; thiamine diphosphate biosynthesis. Functionally, catalyzes the synthesis of the hydroxymethylpyrimidine phosphate (HMP-P) moiety of thiamine from aminoimidazole ribotide (AIR) in a radical S-adenosyl-L-methionine (SAM)-dependent reaction. In Xanthomonas euvesicatoria pv. vesicatoria (strain 85-10) (Xanthomonas campestris pv. vesicatoria), this protein is Phosphomethylpyrimidine synthase.